The primary structure comprises 73 residues: MAKKDGVIEIEGVVTEALPNAMFRVELTNKHVVLAHISGKMRQHYIRILPEDRVVVELSPYDLTRGRIVYRYK.

One can recognise an S1-like domain in the interval 1-73 (MAKKDGVIEI…TRGRIVYRYK (73 aa)).

The protein belongs to the IF-1 family. Component of the 30S ribosomal translation pre-initiation complex which assembles on the 30S ribosome in the order IF-2 and IF-3, IF-1 and N-formylmethionyl-tRNA(fMet); mRNA recruitment can occur at any time during PIC assembly.

It localises to the cytoplasm. In terms of biological role, one of the essential components for the initiation of protein synthesis. Stabilizes the binding of IF-2 and IF-3 on the 30S subunit to which N-formylmethionyl-tRNA(fMet) subsequently binds. Helps modulate mRNA selection, yielding the 30S pre-initiation complex (PIC). Upon addition of the 50S ribosomal subunit IF-1, IF-2 and IF-3 are released leaving the mature 70S translation initiation complex. In Paenarthrobacter aurescens (strain TC1), this protein is Translation initiation factor IF-1.